The sequence spans 199 residues: Putative ATP-dependent Clp protease proteolytic subunit-like (199 aa).

It belongs to the peptidase S14 family. Component of the chloroplastic Clp protease core complex.

It localises to the plastid. The protein resides in the cyanelle. Has lost the two conserved residues (Ser and His) proposed to be part of the active site. Therefore it could be inactive. The polypeptide is Putative ATP-dependent Clp protease proteolytic subunit-like (clpP-B) (Cyanophora paradoxa).